Reading from the N-terminus, the 677-residue chain is DNA ligase (677 aa).

Residues 35-39, 84-85, and Glu115 each bind NAD(+); these read DAVYD and SL. The active-site N6-AMP-lysine intermediate is Lys117. NAD(+)-binding residues include Arg138, Glu177, Lys296, and Lys320. Residues Cys414, Cys417, Cys432, and Cys437 each contribute to the Zn(2+) site. One can recognise a BRCT domain in the interval 599-677; it reads NGILKLNGKT…ETQLLEILEE (79 aa).

This sequence belongs to the NAD-dependent DNA ligase family. LigA subfamily. It depends on Mg(2+) as a cofactor. The cofactor is Mn(2+).

It carries out the reaction NAD(+) + (deoxyribonucleotide)n-3'-hydroxyl + 5'-phospho-(deoxyribonucleotide)m = (deoxyribonucleotide)n+m + AMP + beta-nicotinamide D-nucleotide.. DNA ligase that catalyzes the formation of phosphodiester linkages between 5'-phosphoryl and 3'-hydroxyl groups in double-stranded DNA using NAD as a coenzyme and as the energy source for the reaction. It is essential for DNA replication and repair of damaged DNA. This Nostoc sp. (strain PCC 7120 / SAG 25.82 / UTEX 2576) protein is DNA ligase.